Here is a 65-residue protein sequence, read N- to C-terminus: Small ribosomal subunit protein bS21 (65 aa).

This sequence belongs to the bacterial ribosomal protein bS21 family.

In Geobacter sp. (strain M21), this protein is Small ribosomal subunit protein bS21.